Here is a 508-residue protein sequence, read N- to C-terminus: Photosystem II CP47 reaction center protein (508 aa).

A run of 6 helical transmembrane segments spans residues 21-36 (AVHIMHTALVAGWAGS), 101-115 (IVFSGLCFLAAIWHW), 140-156 (GIHLFLSGVACFGFGAF), 203-218 (IAAGTLGILAGLFHLS), 237-252 (VLSSSIAAVFFAAFVV), and 457-472 (SFALLFFFGHIWHGSR).

Belongs to the PsbB/PsbC family. PsbB subfamily. In terms of assembly, PSII is composed of 1 copy each of membrane proteins PsbA, PsbB, PsbC, PsbD, PsbE, PsbF, PsbH, PsbI, PsbJ, PsbK, PsbL, PsbM, PsbT, PsbX, PsbY, PsbZ, Psb30/Ycf12, at least 3 peripheral proteins of the oxygen-evolving complex and a large number of cofactors. It forms dimeric complexes. It depends on Binds multiple chlorophylls. PSII binds additional chlorophylls, carotenoids and specific lipids. as a cofactor.

The protein localises to the plastid. Its subcellular location is the chloroplast thylakoid membrane. In terms of biological role, one of the components of the core complex of photosystem II (PSII). It binds chlorophyll and helps catalyze the primary light-induced photochemical processes of PSII. PSII is a light-driven water:plastoquinone oxidoreductase, using light energy to abstract electrons from H(2)O, generating O(2) and a proton gradient subsequently used for ATP formation. In Populus trichocarpa (Western balsam poplar), this protein is Photosystem II CP47 reaction center protein.